The chain runs to 205 residues: ATP phosphoribosyltransferase (205 aa).

The protein belongs to the ATP phosphoribosyltransferase family. Short subfamily. Heteromultimer composed of HisG and HisZ subunits.

It localises to the cytoplasm. It carries out the reaction 1-(5-phospho-beta-D-ribosyl)-ATP + diphosphate = 5-phospho-alpha-D-ribose 1-diphosphate + ATP. It functions in the pathway amino-acid biosynthesis; L-histidine biosynthesis; L-histidine from 5-phospho-alpha-D-ribose 1-diphosphate: step 1/9. Catalyzes the condensation of ATP and 5-phosphoribose 1-diphosphate to form N'-(5'-phosphoribosyl)-ATP (PR-ATP). Has a crucial role in the pathway because the rate of histidine biosynthesis seems to be controlled primarily by regulation of HisG enzymatic activity. The protein is ATP phosphoribosyltransferase of Leptospira interrogans serogroup Icterohaemorrhagiae serovar Lai (strain 56601).